A 488-amino-acid polypeptide reads, in one-letter code: MAVLRQFVKNSYSSIPKRFYALSANQKKLLKAPLAECDPTVYKILESEKSRQKESIALIASENFTSRAVMDALGSIMQNKYSEGYPGARYYGGNEFIDQAERLCQTRALEAFHLDGEKWGVNVQPHSGSPANLQAYQAVMKPHDRLMGLDLPHGGHLSHGFSTPQKAISAVSTYFSTMPYNVNKETGIIDYDSLEKAAIQFRPKVIVAGASAYARLVDYKRMRKITEMCNAYLLCDMAHISGLVAAGVIPSPFEYADIVTTTTHKSLRGPRGAMIFYRKGTRSHDKRGNPILYELEDKINFSVFPGHQGGPHNHTITALAVALGQAKTPEFYQYQKDVLSNAKAMANAFITRGYKLVSGGTDTHLVLVDLTDKGVDGARVERILELVNISANKNTVPGDKSALIPRGLRLGTPACTTRGFDEKDFERVVELIDEVVSLTKKINEAALKEGKSKFRDFKAYVGDGSKFSEIAKLKKEVITWAGKFDFPV.

A mitochondrion-targeting transit peptide spans 1-20 (MAVLRQFVKNSYSSIPKRFY). The residue at position 265 (lysine 265) is an N6-(pyridoxal phosphate)lysine.

It belongs to the SHMT family. In terms of assembly, homotetramer. The cofactor is pyridoxal 5'-phosphate.

The protein resides in the mitochondrion. The enzyme catalyses (6R)-5,10-methylene-5,6,7,8-tetrahydrofolate + glycine + H2O = (6S)-5,6,7,8-tetrahydrofolate + L-serine. It participates in one-carbon metabolism; tetrahydrofolate interconversion. Interconversion of serine and glycine. In Schizosaccharomyces pombe (strain 972 / ATCC 24843) (Fission yeast), this protein is Serine hydroxymethyltransferase, mitochondrial (shm2).